A 234-amino-acid polypeptide reads, in one-letter code: Large ribosomal subunit protein uL1 (234 aa).

This sequence belongs to the universal ribosomal protein uL1 family. In terms of assembly, part of the 50S ribosomal subunit.

Functionally, binds directly to 23S rRNA. The L1 stalk is quite mobile in the ribosome, and is involved in E site tRNA release. Protein L1 is also a translational repressor protein, it controls the translation of the L11 operon by binding to its mRNA. The polypeptide is Large ribosomal subunit protein uL1 (Psychromonas ingrahamii (strain DSM 17664 / CCUG 51855 / 37)).